The following is a 586-amino-acid chain: Pyruvate kinase (586 aa).

Arg32 lines the substrate pocket. K(+) contacts are provided by Asn34, Ser36, Asp66, and Thr67. 34 to 37 (NFSH) contacts ATP. 2 residues coordinate ATP: Arg73 and Lys156. Glu222 serves as a coordination point for Mg(2+). The substrate site is built by Gly245, Asp246, and Thr278. Asp246 is a Mg(2+) binding site.

The protein belongs to the pyruvate kinase family. This sequence in the C-terminal section; belongs to the PEP-utilizing enzyme family. As to quaternary structure, homotetramer. Mg(2+) is required as a cofactor. It depends on K(+) as a cofactor.

It catalyses the reaction pyruvate + ATP = phosphoenolpyruvate + ADP + H(+). It functions in the pathway carbohydrate degradation; glycolysis; pyruvate from D-glyceraldehyde 3-phosphate: step 5/5. In Sporosarcina psychrophila (Bacillus psychrophilus), this protein is Pyruvate kinase (pyk).